The primary structure comprises 101 residues: Putative pterin-4-alpha-carbinolamine dehydratase (101 aa).

Belongs to the pterin-4-alpha-carbinolamine dehydratase family.

The enzyme catalyses (4aS,6R)-4a-hydroxy-L-erythro-5,6,7,8-tetrahydrobiopterin = (6R)-L-erythro-6,7-dihydrobiopterin + H2O. The protein is Putative pterin-4-alpha-carbinolamine dehydratase of Streptomyces coelicolor (strain ATCC BAA-471 / A3(2) / M145).